We begin with the raw amino-acid sequence, 729 residues long: Oligopeptide transporter 4 (729 aa).

Ala-2 carries the N-acetylalanine modification. A Phosphoserine modification is found at Ser-8. Helical transmembrane passes span 37-57 (MWFL…FFSY), 61-81 (PLVI…HFLA), 123-143 (AFGS…AFYG), 148-168 (FIAG…WAGL), 177-194 (AHMW…FRAL), 207-227 (FFVI…YLFT), 256-276 (GLGA…SPLI), 279-299 (FFAI…VLPL), 352-372 (LSMF…STLT), 410-430 (WWFY…CVFL), 438-458 (WWGL…ISII), 522-542 (FLVQ…VAWW), 592-612 (YAAM…VWSL), 621-637 (WIPL…TAMM), 640-660 (ATAV…LFVF), and 673-693 (VLSA…YFSV).

The protein belongs to the oligopeptide OPT transporter (TC 2.A.67.1) family. In terms of tissue distribution, expressed in flowers, leaves, roots, and stems.

The protein resides in the membrane. In terms of biological role, involved in the translocation of tetra- and pentapeptides across the cellular membrane in an energy-dependent manner. In Arabidopsis thaliana (Mouse-ear cress), this protein is Oligopeptide transporter 4 (OPT4).